Here is a 1241-residue protein sequence, read N- to C-terminus: Anion exchange protein 2 (1241 aa).

The tract at residues 1–240 (MSSAPRRPAK…RSYNLQERRR (240 aa)) is disordered. The Cytoplasmic segment spans residues 1 to 707 (MSSAPRRPAK…SDFRDALDPQ (707 aa)). 2 stretches are compositionally biased toward basic and acidic residues: residues 37-49 (ELHR…RFEE) and 58-75 (GGEE…EYHR). 2 stretches are compositionally biased toward basic residues: residues 76-85 (QSSHHIHHPL) and 94-110 (RRRK…RRRP). 6 positions are modified to phosphoserine: Ser113, Ser132, Ser144, Ser170, Ser172, and Ser173. The segment covering 120-133 (TIEEGEEDEDEASE) has biased composition (acidic residues). Residues 141–155 (TQPSPVSTPSSVQFF) are compositionally biased toward low complexity. Phosphothreonine is present on Thr183. Low complexity predominate over residues 189 to 209 (GAQAGTQVEEAEAEAVAVASG). The segment covering 210–219 (TAGGDDGGAS) has biased composition (gly residues). Position 243 is a phosphoserine (Ser243). Thr257 is modified (phosphothreonine). Lys274 is modified (N6-methyllysine). Residues 288–320 (LVRKNAKGSTQSGREGREPGPTPRARPRAPHKP) are disordered. At Ser443 the chain carries Phosphoserine. A disordered region spans residues 449-471 (SLLGHHHGQGAESDPHVTEPLMG). The next 4 helical transmembrane spans lie at 708–731 (CLAA…GLLG), 737–774 (LIGV…LLVF), 784–816 (SNHL…SFLV), and 826–847 (IFAF…VKIF). The tract at residues 708–1241 (CLAAVIFIYF…DEYNEMPMPV (534 aa)) is membrane (anion exchange). Residues 848–900 (QEHPLHGCSASNSSEVDGGENMTWAGARPTLGPGNRSLAGQSGQGKPRGQPNT) are Extracellular-facing. N-linked (GlcNAc...) asparagine glycosylation is found at Asn859, Asn868, and Asn882. The helical transmembrane segment at 901-918 (ALLSLVLMAGTFFIAFFL) threads the bilayer. The Cytoplasmic segment spans residues 919–933 (RKFKNSRFFPGRIRR). 5 helical membrane passes run 934–954 (VIGD…DYSI), 988–1010 (PFPV…LIFM), 1036–1059 (LLLI…AATV), 1091–1136 (VTGL…IQFY), and 1163–1199 (MHLF…TVPL). The S-palmitoyl cysteine moiety is linked to residue Cys1173.

This sequence belongs to the anion exchanger (TC 2.A.31) family. As to expression, expressed in the liver, stomach, kidney, prostate, thyroid and rectum. Expressed in the liver and kidney.

It localises to the apical cell membrane. The protein localises to the basolateral cell membrane. The catalysed reaction is hydrogencarbonate(in) + chloride(out) = hydrogencarbonate(out) + chloride(in). Its function is as follows. Sodium-independent anion exchanger which mediates the electroneutral exchange of chloride for bicarbonate ions across the cell membrane. Plays an important role in osteoclast differentiation and function. Regulates bone resorption and calpain-dependent actin cytoskeleton organization in osteoclasts via anion exchange-dependent control of pH. Essential for intracellular pH regulation in CD8(+) T-cells upon CD3 stimulation, modulating CD8(+) T-cell responses. The protein is Anion exchange protein 2 (SLC4A2) of Homo sapiens (Human).